The sequence spans 432 residues: Glutamyl-tRNA reductase (432 aa).

Substrate is bound by residues 55 to 58 (TCNR), serine 114, 119 to 121 (ETQ), and glutamine 125. Cysteine 56 acts as the Nucleophile in catalysis. 194–199 (GAGEMI) lines the NADP(+) pocket.

The protein belongs to the glutamyl-tRNA reductase family. In terms of assembly, homodimer.

It catalyses the reaction (S)-4-amino-5-oxopentanoate + tRNA(Glu) + NADP(+) = L-glutamyl-tRNA(Glu) + NADPH + H(+). The protein operates within porphyrin-containing compound metabolism; protoporphyrin-IX biosynthesis; 5-aminolevulinate from L-glutamyl-tRNA(Glu): step 1/2. Catalyzes the NADPH-dependent reduction of glutamyl-tRNA(Glu) to glutamate 1-semialdehyde (GSA). The protein is Glutamyl-tRNA reductase of Burkholderia ambifaria (strain ATCC BAA-244 / DSM 16087 / CCUG 44356 / LMG 19182 / AMMD) (Burkholderia cepacia (strain AMMD)).